Consider the following 695-residue polypeptide: IQ domain-containing protein E (695 aa).

The segment at 29–55 is disordered; that stretch reads KAKRKAFHKPPPTSPKSPYLSKPRKVA. 3 coiled-coil regions span residues 157–264, 292–358, and 387–477; these read LHVQ…RLQT, SALL…SSKS, and NKDH…CPEV. S322 bears the Phosphoserine mark. Disordered regions lie at residues 357 to 390, 465 to 521, 564 to 599, and 618 to 695; these read KSHA…NKDH, EMKK…RRDA, ASKA…TGSP, and RARH…NFPV. Residues 465–482 show a composition bias toward basic and acidic residues; that stretch reads EMKKEEKEDCPEVPHKAQ. 2 consecutive IQ domains span residues 542–571 and 601–630; these read LDEA…HGSE and QEEA…RTTT.

As to quaternary structure, component of the EvC complex composed of EFCAB7, IQCE, EVC2 and EVC; built from two subcomplexes, EVC2:EVC and EFCAB7:IQCE. Interacts (via N-terminus) with EFCAB7 (via EF-hands 1 and 2); this interaction anchors the EVC-EVC2 complex in a signaling microdomain at the base of cilia and stimulates the Hedgehog (Hh) pathway. Interacts with EVC2 (via N-terminal end). Interacts with EVC.

It localises to the cell projection. It is found in the cilium membrane. Component of the EvC complex that positively regulates ciliary Hedgehog (Hh) signaling. Required for proper limb morphogenesis. The chain is IQ domain-containing protein E (IQCE) from Homo sapiens (Human).